The following is a 427-amino-acid chain: Trigger factor (427 aa).

A PPIase FKBP-type domain is found at 163-248; the sequence is GDTVVIDFEG…VHEVKAKELP (86 aa).

This sequence belongs to the FKBP-type PPIase family. Tig subfamily.

It localises to the cytoplasm. It catalyses the reaction [protein]-peptidylproline (omega=180) = [protein]-peptidylproline (omega=0). Functionally, involved in protein export. Acts as a chaperone by maintaining the newly synthesized protein in an open conformation. Functions as a peptidyl-prolyl cis-trans isomerase. The chain is Trigger factor from Enterococcus faecalis (strain ATCC 700802 / V583).